A 134-amino-acid polypeptide reads, in one-letter code: MAKSPANNAAQRVRKKVRKNISDGIAHVHASFNNTIITITDRQGNALSWASSGGQGFKGSRKSTPFAAQVASEVAGRAAIEQGIKNLDVEIKGPGPGRESSVRALGALGIRITSISDVTPVPHNGCRPQKRRRI.

The protein belongs to the universal ribosomal protein uS11 family. In terms of assembly, part of the 30S ribosomal subunit. Interacts with proteins S7 and S18. Binds to IF-3.

Its function is as follows. Located on the platform of the 30S subunit, it bridges several disparate RNA helices of the 16S rRNA. Forms part of the Shine-Dalgarno cleft in the 70S ribosome. The polypeptide is Small ribosomal subunit protein uS11 (Acidovorax ebreus (strain TPSY) (Diaphorobacter sp. (strain TPSY))).